Reading from the N-terminus, the 125-residue chain is UPF0738 protein GK0828 (125 aa).

This sequence belongs to the UPF0738 family.

This Geobacillus kaustophilus (strain HTA426) protein is UPF0738 protein GK0828.